Reading from the N-terminus, the 416-residue chain is Serine hydroxymethyltransferase (416 aa).

(6S)-5,6,7,8-tetrahydrofolate-binding positions include Leu121 and 125–127; that span reads GHL. Position 230 is an N6-(pyridoxal phosphate)lysine (Lys230).

This sequence belongs to the SHMT family. As to quaternary structure, homodimer. Pyridoxal 5'-phosphate is required as a cofactor.

It is found in the cytoplasm. It catalyses the reaction (6R)-5,10-methylene-5,6,7,8-tetrahydrofolate + glycine + H2O = (6S)-5,6,7,8-tetrahydrofolate + L-serine. The protein operates within one-carbon metabolism; tetrahydrofolate interconversion. It participates in amino-acid biosynthesis; glycine biosynthesis; glycine from L-serine: step 1/1. Its function is as follows. Catalyzes the reversible interconversion of serine and glycine with tetrahydrofolate (THF) serving as the one-carbon carrier. This reaction serves as the major source of one-carbon groups required for the biosynthesis of purines, thymidylate, methionine, and other important biomolecules. Also exhibits THF-independent aldolase activity toward beta-hydroxyamino acids, producing glycine and aldehydes, via a retro-aldol mechanism. In Nitrosomonas europaea (strain ATCC 19718 / CIP 103999 / KCTC 2705 / NBRC 14298), this protein is Serine hydroxymethyltransferase.